The following is a 253-amino-acid chain: Large ribosomal subunit protein uL4 (253 aa).

The tract at residues 78–107 is disordered; that stretch reads SRAARVPHAKGGRRAHPPKPEADRSEKVNT. The segment covering 82–94 has biased composition (basic residues); it reads RVPHAKGGRRAHP. The segment covering 95–107 has biased composition (basic and acidic residues); the sequence is PKPEADRSEKVNT.

This sequence belongs to the universal ribosomal protein uL4 family. Part of the 50S ribosomal subunit.

One of the primary rRNA binding proteins, this protein initially binds near the 5'-end of the 23S rRNA. It is important during the early stages of 50S assembly. It makes multiple contacts with different domains of the 23S rRNA in the assembled 50S subunit and ribosome. In terms of biological role, forms part of the polypeptide exit tunnel. The protein is Large ribosomal subunit protein uL4 of Methanosarcina acetivorans (strain ATCC 35395 / DSM 2834 / JCM 12185 / C2A).